The primary structure comprises 342 residues: Dihydroorotate dehydrogenase (quinone) (342 aa).

FMN-binding positions include 61-65 and T85; that span reads AGLDK. K65 contributes to the substrate binding site. A substrate-binding site is contributed by 110 to 114; that stretch reads NRMGF. Positions 138 and 171 each coordinate FMN. A substrate-binding site is contributed by N171. S174 functions as the Nucleophile in the catalytic mechanism. N176 is a binding site for substrate. Residues K216 and T244 each coordinate FMN. Position 245–246 (245–246) interacts with substrate; sequence NT. Residues G267, G296, and 317–318 each bind FMN; that span reads YS.

This sequence belongs to the dihydroorotate dehydrogenase family. Type 2 subfamily. In terms of assembly, monomer. FMN serves as cofactor.

It localises to the cell membrane. It catalyses the reaction (S)-dihydroorotate + a quinone = orotate + a quinol. It functions in the pathway pyrimidine metabolism; UMP biosynthesis via de novo pathway; orotate from (S)-dihydroorotate (quinone route): step 1/1. Catalyzes the conversion of dihydroorotate to orotate with quinone as electron acceptor. The polypeptide is Dihydroorotate dehydrogenase (quinone) (Pseudomonas aeruginosa (strain LESB58)).